The chain runs to 733 residues: MTSHDVRDVLNLPSDHAGPRPSKKARTATPRPNLKGLAREVQNLGGDNPIAIVPEVSIFKKRRTVSRKPAAKWELKAFTNSARGDDGALVLRHWKRKPDGTVQDGSAEGQDSAATADNSADKPEDSSFAKFNVRVSVPQYSEDQYNTNLKHPDWTKEETDYLLELAKDFDLRWPIIWDRYEYAPQQPEGETPDGMAVVPASKPRTMEDLKARYYEVAAKMMAVQKPAQYMTRPEFELYEMMLHFDPKQEQNRKRFAENTLKRSSDEAREEEALLLEIKRIMARTERFNEERRELYNRLDYPASESDINSFKTSAGLQSLLQTLLNVDKSKKRKSIMAPENGVPPAAAAAAATAALPPAAAAVAAAPEVPPAASRRESLAASSTAGANDHHEPPVREPPVRHERQESRSHHRNESRSERADRHGAHGHHHRDSVSQTPATPAEAPTPVPAPAPAANKKKGPQQPERRKLSEHEEQVYGVSHHDRLGSGPTFRYEKINKLYSHKSGQQQMRITNLLLELDIPARLIMPTAAVTAQFEVLWGAVTTLVDLRKMSDKVDAEIKLEEAKKAERERAAREAAEARGETVEKKGGEEEGEGGGADDKQKDGGGAGGDDAKDKSGESAQADEQKNDQKAEDAKAQKEQQGEGQDQQKKGEEGLVVPIKEGGGEKGQGDAAAAATAAEKEAESSSNQPKIKEEADENGSSSGAGASSGARQHKRSASVLSNASDKSTKKQKK.

Disordered regions lie at residues 1–34 and 98–128; these read MTSHDVRDVLNLPSDHAGPRPSKKARTATPRPNL and PDGTVQDGSAEGQDSAATADNSADKPEDSSF. Positions 146 to 217 constitute an SANT domain; that stretch reads NTNLKHPDWT…DLKARYYEVA (72 aa). The stretch at 247–299 forms a coiled coil; that stretch reads KQEQNRKRFAENTLKRSSDEAREEEALLLEIKRIMARTERFNEERRELYNRLD. Low complexity predominate over residues 371–384; sequence AASRRESLAASSTA. Disordered stretches follow at residues 371–488 and 564–733; these read AASR…GSGP and KKAE…KQKK. 4 stretches are compositionally biased toward basic and acidic residues: residues 387–423, 463–484, 564–589, and 610–653; these read NDHHEPPVREPPVRHERQESRSHHRNESRSERADRHG, PERRKLSEHEEQVYGVSHHDRL, KKAERERAAREAAEARGETVEKKGGE, and DDAK…KGEE. Over residues 699–710 the composition is skewed to low complexity; it reads GSSSGAGASSGA.

Belongs to the SWC4 family. As to quaternary structure, component of the SWR1 chromatin-remodeling complex and of the NuA4 histone acetyltransferase complex.

It is found in the nucleus. Component of the SWR1 complex which mediates the ATP-dependent exchange of histone H2A for the H2A variant H2A.Z leading to transcriptional regulation of selected genes by chromatin remodeling. Component of the NuA4 histone acetyltransferase complex which is involved in transcriptional activation of selected genes principally by acetylation of nucleosomal histone H4 and H2A. The NuA4 complex is also involved in DNA repair. This is SWR1-complex protein 4 (crc-1) from Neurospora crassa (strain ATCC 24698 / 74-OR23-1A / CBS 708.71 / DSM 1257 / FGSC 987).